Consider the following 159-residue polypeptide: Anaerobic nitrite reductase HB2 (159 aa).

In terms of domain architecture, Globin spans 2-152 (GFTEKQEGLV…LAEAIKAEMK (151 aa)). The short motif at 35–39 (EIAPG) is the Homodimerization element. Positions 45, 59, 63, and 98 each coordinate heme b. A Homodimerization motif is present at residues 105-117 (DPHFEVVKEALLR).

This sequence belongs to the plant globin family. As to quaternary structure, homodimer. Requires heme b as cofactor.

The protein resides in the cytoplasm. It is found in the nucleus. The enzyme catalyses Fe(III)-heme b-[protein] + nitric oxide + H2O = Fe(II)-heme b-[protein] + nitrite + 2 H(+). Phytoglobin that reduces nitrite to nitric oxide (NO) under anoxic conditions (e.g. during flooding or in waterlogged soil). May not function as an oxygen storage or transport protein. Has an unusually high affinity for O(2) through an hexacoordinate heme iron because of a very low dissociation constant. The protein is Anaerobic nitrite reductase HB2 of Gossypium hirsutum (Upland cotton).